The following is an 80-amino-acid chain: Small ribosomal subunit protein bS18 (80 aa).

This sequence belongs to the bacterial ribosomal protein bS18 family. As to quaternary structure, part of the 30S ribosomal subunit. Forms a tight heterodimer with protein bS6.

Its function is as follows. Binds as a heterodimer with protein bS6 to the central domain of the 16S rRNA, where it helps stabilize the platform of the 30S subunit. In Methylocella silvestris (strain DSM 15510 / CIP 108128 / LMG 27833 / NCIMB 13906 / BL2), this protein is Small ribosomal subunit protein bS18.